Reading from the N-terminus, the 264-residue chain is Ferric siderophore reductase (264 aa).

One can recognise an FAD-binding FR-type domain in the interval 9-127 (SPTRLTYISD…PGPLKMNRFD (119 aa)). FAD-binding residues include Arg-73, Ser-74, Thr-76, Asp-90, Val-92, His-96, Ala-100, Thr-101, Lys-247, Asn-249, Thr-250, and Ala-252.

Belongs to the SIP oxidoreductase family. The cofactor is FAD.

Its function is as follows. Ferric-siderophore reductase involved in iron removal from the siderophores after their transport into the cell. Catalyzes the reduction of the ferric iron bound to the hydroxamate siderophores produced by Shewanella to ferrous iron. Can use a ferredoxin as electron donor. Despite the clear evidence for the interaction with NAD(P)H, no direct reduction of the enzyme by these compounds is observed, nor consumption of NAD(P)H, suggesting that NADH and NADPH are not the physiological electron donors. This Shewanella frigidimarina (strain NCIMB 400) protein is Ferric siderophore reductase.